Consider the following 24-residue polypeptide: Lectin (24 aa).

Polar residues predominate over residues 1 to 18; it reads AEEQSFSSTKFSTDQPNL. The interval 1-24 is disordered; the sequence is AEEQSFSSTKFSTDQPNLILQGDA.

This sequence belongs to the leguminous lectin family. In terms of assembly, homotetramer.

The sequence is that of Lectin from Crotalaria juncea (Sunn hemp).